Here is a 102-residue protein sequence, read N- to C-terminus: Putative ubiquitin-like protein FUBI-like protein ENSP00000310146 (102 aa).

One can recognise a Ubiquitin-like domain in the interval 23-99 (LCPQVAYVRA…LEVVGRRLGV (77 aa)).

The sequence is that of Putative ubiquitin-like protein FUBI-like protein ENSP00000310146 from Homo sapiens (Human).